The following is a 201-amino-acid chain: Small ribosomal subunit protein uS4 (201 aa).

Residues 91 to 151 (SRLDNVVYRA…EKSQKMNWFE (61 aa)) form the S4 RNA-binding domain.

It belongs to the universal ribosomal protein uS4 family. As to quaternary structure, part of the 30S ribosomal subunit. Contacts protein S5. The interaction surface between S4 and S5 is involved in control of translational fidelity.

Functionally, one of the primary rRNA binding proteins, it binds directly to 16S rRNA where it nucleates assembly of the body of the 30S subunit. With S5 and S12 plays an important role in translational accuracy. The chain is Small ribosomal subunit protein uS4 from Corynebacterium glutamicum (strain ATCC 13032 / DSM 20300 / JCM 1318 / BCRC 11384 / CCUG 27702 / LMG 3730 / NBRC 12168 / NCIMB 10025 / NRRL B-2784 / 534).